The following is a 335-amino-acid chain: MIEFHNVHKTYRVAGKEIPALHPTNLRVDDGQVFGIIGHSGAGKSTLLRLINRLETPSGGQIVVDGEDVTALDANGLRRFRQQVGMIFQHFNLLASRTVADNVAMPLTLAGDMPRKQIDQRVAELLERVGLSDHAKKYPAQLSGGQKQRVGIARALATKPKILLCDEATSALDPQTTASVLQLLAEINRELKLTIVLITHEMDVIRRVCDQVAVMDAGVIVEQGKVADVFLHPQHSTTKRFVQEDDQVDENEQRDDFAHVQGRIVRLTFQGDATYAPLLGTVARETGVDYSILAGRIDRIKDTPYGQLTLAITGGDMDAAFARFTAADVHMEVLR.

The 241-residue stretch at 2 to 242 (IEFHNVHKTY…PQHSTTKRFV (241 aa)) folds into the ABC transporter domain. 38-45 (GHSGAGKS) is an ATP binding site.

The protein belongs to the ABC transporter superfamily. Methionine importer (TC 3.A.1.24) family. The complex is composed of two ATP-binding proteins (MetN), two transmembrane proteins (MetI) and a solute-binding protein (MetQ).

It is found in the cell inner membrane. It catalyses the reaction L-methionine(out) + ATP + H2O = L-methionine(in) + ADP + phosphate + H(+). The catalysed reaction is D-methionine(out) + ATP + H2O = D-methionine(in) + ADP + phosphate + H(+). Functionally, part of the ABC transporter complex MetNIQ involved in methionine import. Responsible for energy coupling to the transport system. The sequence is that of Methionine import ATP-binding protein MetN 2 from Pseudomonas syringae pv. tomato (strain ATCC BAA-871 / DC3000).